Consider the following 332-residue polypeptide: Beta-ketoacyl-[acyl-carrier-protein] synthase III 2 (332 aa).

Active-site residues include Cys-115 and His-252. Residues 253–257 (SANLR) form an ACP-binding region. Asn-282 is a catalytic residue.

The protein belongs to the thiolase-like superfamily. FabH family. Homodimer.

It is found in the cytoplasm. The enzyme catalyses malonyl-[ACP] + acetyl-CoA + H(+) = 3-oxobutanoyl-[ACP] + CO2 + CoA. It functions in the pathway lipid metabolism; fatty acid biosynthesis. Functionally, catalyzes the condensation reaction of fatty acid synthesis by the addition to an acyl acceptor of two carbons from malonyl-ACP. Catalyzes the first condensation reaction which initiates fatty acid synthesis and may therefore play a role in governing the total rate of fatty acid production. Possesses both acetoacetyl-ACP synthase and acetyl transacylase activities. Its substrate specificity determines the biosynthesis of branched-chain and/or straight-chain of fatty acids. The protein is Beta-ketoacyl-[acyl-carrier-protein] synthase III 2 of Halalkalibacterium halodurans (strain ATCC BAA-125 / DSM 18197 / FERM 7344 / JCM 9153 / C-125) (Bacillus halodurans).